The following is a 1409-amino-acid chain: Adhesion and penetration protein autotransporter (1409 aa).

The N-terminal stretch at 1-25 (MKKTVFRLNFLTACVSLGIASQAWA) is a signal peptide. In terms of domain architecture, Peptidase S6 spans 26 to 294 (GHTYFGIDYQ…LIREEWFYNE (269 aa)). The active site involves S250. 2 disordered regions span residues 866 to 888 (YSAS…TPTS) and 1016 to 1078 (AKQV…SKRA). Positions 1057–1067 (VEQTTETQTSK) are enriched in polar residues. The span at 1068–1077 (PKTKKGRSKR) shows a compositional bias: basic residues. Positions 1156–1409 (VDQAQSALWT…NVGVKLGYRW (254 aa)) constitute an Autotransporter domain.

The protein localises to the periplasm. Its subcellular location is the secreted. It is found in the cell surface. The protein resides in the cell outer membrane. Its function is as follows. Probable protease; promotes adherence and invasion by directly binding to a host cell structure. The chain is Adhesion and penetration protein autotransporter (hap) from Haemophilus influenzae (strain ATCC 51907 / DSM 11121 / KW20 / Rd).